The primary structure comprises 137 residues: Ribosome-binding factor A (137 aa).

The protein belongs to the RbfA family. As to quaternary structure, monomer. Binds 30S ribosomal subunits, but not 50S ribosomal subunits or 70S ribosomes.

It is found in the cytoplasm. Functionally, one of several proteins that assist in the late maturation steps of the functional core of the 30S ribosomal subunit. Associates with free 30S ribosomal subunits (but not with 30S subunits that are part of 70S ribosomes or polysomes). Required for efficient processing of 16S rRNA. May interact with the 5'-terminal helix region of 16S rRNA. In Nitrobacter winogradskyi (strain ATCC 25391 / DSM 10237 / CIP 104748 / NCIMB 11846 / Nb-255), this protein is Ribosome-binding factor A.